Reading from the N-terminus, the 229-residue chain is E3 ubiquitin ligase TRIM40 (229 aa).

The RING-type zinc-finger motif lies at 14–57 (CPICQESLKEAVSTNCGHLFCRVCLTQHVEKASASGVFCCPLCR). The segment at 66–107 (GTGYICPNHQKRVCRFCEESRLLLCVECLVSPEHMSHHELTI) adopts a B box-type zinc-finger fold. Positions 71, 74, 93, and 99 each coordinate Zn(2+). The stretch at 107–154 (IENALSHYKERLNRRSRKLRKDIAELQRLKAQQEKKLQALQQWLGQLE) forms a coiled coil.

Belongs to the TRIM/RBCC family. In terms of assembly, interacts with NEDD8.

The enzyme catalyses S-ubiquitinyl-[E2 ubiquitin-conjugating enzyme]-L-cysteine + [acceptor protein]-L-lysine = [E2 ubiquitin-conjugating enzyme]-L-cysteine + N(6)-ubiquitinyl-[acceptor protein]-L-lysine.. In terms of biological role, E3 ubiquitin-protein ligase that plays a role in the limitation of the innate immune response. Mediates inhibition of the RLR signaling pathway by ubiquitinating RIGI and IFIH1 receptors, leading to their proteasomal degradation. Also promotes the neddylation of IKBKG/NEMO, stabilizing NFKBIA, and thereby inhibiting of NF-kappa-B nuclear translocation and activation. This is E3 ubiquitin ligase TRIM40 (TRIM40) from Pan troglodytes (Chimpanzee).